The primary structure comprises 232 residues: Small ribosomal subunit protein uS3 (232 aa).

A KH type-2 domain is found at 39-107 (IRKFLKTKLY…DIAINIKEER (69 aa)). Basic and acidic residues predominate over residues 213-222 (QADKNEDTSP). The segment at 213–232 (QADKNEDTSPKKPRRARRGK) is disordered. Residues 223-232 (KKPRRARRGK) show a composition bias toward basic residues.

The protein belongs to the universal ribosomal protein uS3 family. As to quaternary structure, part of the 30S ribosomal subunit. Forms a tight complex with proteins S10 and S14.

Its function is as follows. Binds the lower part of the 30S subunit head. Binds mRNA in the 70S ribosome, positioning it for translation. The protein is Small ribosomal subunit protein uS3 of Campylobacter fetus subsp. fetus (strain 82-40).